The sequence spans 619 residues: UPF0329 protein ECU01_0100/ECU01_1510/ECU08_0030 (619 aa).

The span at 350-384 shows a compositional bias: basic and acidic residues; it reads REEREKREKREKREESKGRGKRGAGEAKEESKEED. The disordered stretch occupies residues 350-428; sequence REEREKREKR…GKRKGDGHHY (79 aa). A compositionally biased stretch (acidic residues) spans 385–399; sequence GKEEEGVEAEEEESA. Basic residues predominate over residues 411 to 428; that stretch reads ARRKKSLKGKRKGDGHHY.

This sequence belongs to the UPF0329 family.

In Encephalitozoon cuniculi (strain GB-M1) (Microsporidian parasite), this protein is UPF0329 protein ECU01_0100/ECU01_1510/ECU08_0030.